The primary structure comprises 105 residues: MKNKIKIRLKSFDHRSLDQATKEIVSAVKRTFATINGPIPLPRKIERFTVNRSPHVHKKSREQFEIRKHKRLLVIDDPNPAVVDALSKVDLAAGVDVVIELESGE.

This sequence belongs to the universal ribosomal protein uS10 family. In terms of assembly, part of the 30S ribosomal subunit.

Functionally, involved in the binding of tRNA to the ribosomes. In Rickettsia prowazekii (strain Madrid E), this protein is Small ribosomal subunit protein uS10.